The following is a 221-amino-acid chain: Deoxyribose-phosphate aldolase (221 aa).

D89 functions as the Proton donor/acceptor in the catalytic mechanism. K151 acts as the Schiff-base intermediate with acetaldehyde in catalysis. K180 serves as the catalytic Proton donor/acceptor.

It belongs to the DeoC/FbaB aldolase family. DeoC type 1 subfamily.

It localises to the cytoplasm. It carries out the reaction 2-deoxy-D-ribose 5-phosphate = D-glyceraldehyde 3-phosphate + acetaldehyde. The protein operates within carbohydrate degradation; 2-deoxy-D-ribose 1-phosphate degradation; D-glyceraldehyde 3-phosphate and acetaldehyde from 2-deoxy-alpha-D-ribose 1-phosphate: step 2/2. Its function is as follows. Catalyzes a reversible aldol reaction between acetaldehyde and D-glyceraldehyde 3-phosphate to generate 2-deoxy-D-ribose 5-phosphate. The chain is Deoxyribose-phosphate aldolase from Brevibacillus brevis (strain 47 / JCM 6285 / NBRC 100599).